A 201-amino-acid chain; its full sequence is Cysteine dioxygenase type 1 (201 aa).

3 residues coordinate Fe cation: His-86, His-88, and His-141. Positions 93–158 (CFLKLLQGQL…TEPAVSLHLY (66 aa)) form a cross-link, 3'-(S-cysteinyl)-tyrosine (Cys-Tyr).

It belongs to the cysteine dioxygenase family. In terms of assembly, monomer. The cofactor is Fe cation. Requires Ni(2+) as cofactor. It depends on Zn(2+) as a cofactor. In terms of processing, the thioether cross-link between Cys-93 and Tyr-158 plays a structural role through stabilizing the Fe(2+) ion, and prevents the production of highly damaging free hydroxyl radicals by holding the oxygen radical via hydroxyl hydrogen.

The catalysed reaction is L-cysteine + O2 = 3-sulfino-L-alanine + H(+). Its pathway is organosulfur biosynthesis; taurine biosynthesis; hypotaurine from L-cysteine: step 1/2. Functionally, catalyzes the oxidation of cysteine to cysteine sulfinic acid with addition of molecular dioxygen. The polypeptide is Cysteine dioxygenase type 1 (cdo1) (Danio rerio (Zebrafish)).